Consider the following 284-residue polypeptide: Phosphatidylglycerol--prolipoprotein diacylglyceryl transferase (284 aa).

A run of 7 helical transmembrane segments spans residues I19–L39, L60–Y80, G98–Y118, F130–G150, Q199–C219, G225–F245, and F258–Y278. A 1,2-diacyl-sn-glycero-3-phospho-(1'-sn-glycerol) is bound at residue R143.

Belongs to the Lgt family.

It is found in the cell inner membrane. The enzyme catalyses L-cysteinyl-[prolipoprotein] + a 1,2-diacyl-sn-glycero-3-phospho-(1'-sn-glycerol) = an S-1,2-diacyl-sn-glyceryl-L-cysteinyl-[prolipoprotein] + sn-glycerol 1-phosphate + H(+). Its pathway is protein modification; lipoprotein biosynthesis (diacylglyceryl transfer). In terms of biological role, catalyzes the transfer of the diacylglyceryl group from phosphatidylglycerol to the sulfhydryl group of the N-terminal cysteine of a prolipoprotein, the first step in the formation of mature lipoproteins. In Blochmanniella floridana, this protein is Phosphatidylglycerol--prolipoprotein diacylglyceryl transferase.